Here is a 416-residue protein sequence, read N- to C-terminus: ABSCISIC ACID-INSENSITIVE 5-like protein 5 (416 aa).

Residues 1–23 (MDGSMNLGNEPPGDGGGGGGLTR) form a disordered region. A compositionally biased stretch (gly residues) spans 13 to 22 (GDGGGGGGLT). Phosphoserine occurs at positions 26, 45, and 86. The residue at position 135 (threonine 135) is a Phosphothreonine. The disordered stretch occupies residues 300–326 (SEGIGKSNGDSSSLSPSPYMFNGGVRG). Residues 336–399 (VERRQRRMIK…KNQETEMRNL (64 aa)) form the bZIP domain. Residues 338–357 (RRQRRMIKNRESAARSRARK) form a basic motif region. The tract at residues 364–385 (LEAEVAKLKEENDELQRKQARI) is leucine-zipper. Residues 388–416 (MQKNQETEMRNLLQGGPKKKLRRTESGPW) form a disordered region.

Belongs to the bZIP family. ABI5 subfamily. As to quaternary structure, DNA-binding heterodimer. Interacts with ARIA. In terms of processing, the activation by phosphorylation is induced by abscisic acid (ABA). Phosphorylated by SRK2C, SRK2D, SRK2E, SRK2F and SRK2I in vitro. As to expression, expressed in roots, leaves, flowers and siliques but not in seeds.

The protein localises to the nucleus. Involved in ABA and stress responses and acts as a positive component of glucose signal transduction. Functions as a transcriptional activator in the ABA-inducible expression of rd29B. Binds specifically to the ABA-responsive element (ABRE) of the rd29B gene promoter. The chain is ABSCISIC ACID-INSENSITIVE 5-like protein 5 (ABF2) from Arabidopsis thaliana (Mouse-ear cress).